Consider the following 53-residue polypeptide: ATP synthase F(0) complex subunit 8 (53 aa).

Residues 8 to 24 traverse the membrane as a helical segment; that stretch reads PWLTTFLIVWISLIVIL.

The protein belongs to the ATPase protein 8 family. In terms of assembly, component of the ATP synthase complex composed at least of ATP5F1A/subunit alpha, ATP5F1B/subunit beta, ATP5MC1/subunit c (homooctomer), MT-ATP6/subunit a, MT-ATP8/subunit 8, ATP5ME/subunit e, ATP5MF/subunit f, ATP5MG/subunit g, ATP5MK/subunit k, ATP5MJ/subunit j, ATP5F1C/subunit gamma, ATP5F1D/subunit delta, ATP5F1E/subunit epsilon, ATP5PF/subunit F6, ATP5PB/subunit b, ATP5PD/subunit d, ATP5PO/subunit OSCP. ATP synthase complex consists of a soluble F(1) head domain (subunits alpha(3) and beta(3)) - the catalytic core - and a membrane F(0) domain - the membrane proton channel (subunits c, a, 8, e, f, g, k and j). These two domains are linked by a central stalk (subunits gamma, delta, and epsilon) rotating inside the F1 region and a stationary peripheral stalk (subunits F6, b, d, and OSCP).

The protein resides in the mitochondrion membrane. Functionally, subunit 8, of the mitochondrial membrane ATP synthase complex (F(1)F(0) ATP synthase or Complex V) that produces ATP from ADP in the presence of a proton gradient across the membrane which is generated by electron transport complexes of the respiratory chain. ATP synthase complex consist of a soluble F(1) head domain - the catalytic core - and a membrane F(1) domain - the membrane proton channel. These two domains are linked by a central stalk rotating inside the F(1) region and a stationary peripheral stalk. During catalysis, ATP synthesis in the catalytic domain of F(1) is coupled via a rotary mechanism of the central stalk subunits to proton translocation. In vivo, can only synthesize ATP although its ATP hydrolase activity can be activated artificially in vitro. Part of the complex F(0) domain. The sequence is that of ATP synthase F(0) complex subunit 8 from Alligator mississippiensis (American alligator).